We begin with the raw amino-acid sequence, 319 residues long: MHDSDRQKTILAILGPTASGKSALAFSIAKEINAEIISADSRQIYRELNIGTAKPSQETLRQIKHHFVNELSIGDPFTAGNFAREASARIRNILHSGKNVLIAGGSTLYLEALLNGFADLPPADTEKRQQLAIELETFGSKHLFERLRQLDPLQAATLDHTKTQRLVRSLEIIELSGHTVTEMQKKHIQPLADINVITCGLSLPRPLLYEKINRRTDQMLASGLLQEAVALFTKYYPYCDVITTNALQTVGYQELFAYLDEKTDFKTAITLIKQHTRNYAKRQLTFFKNRLNVNWMDAPENEHELSMLTTSCCRMITGN.

15 to 22 is an ATP binding site; the sequence is GPTASGKS. 17–22 contacts substrate; that stretch reads TASGKS. 2 interaction with substrate tRNA regions span residues 40–43 and 164–168; these read DSRQ and QRLVR.

This sequence belongs to the IPP transferase family. As to quaternary structure, monomer. Mg(2+) is required as a cofactor.

It carries out the reaction adenosine(37) in tRNA + dimethylallyl diphosphate = N(6)-dimethylallyladenosine(37) in tRNA + diphosphate. Functionally, catalyzes the transfer of a dimethylallyl group onto the adenine at position 37 in tRNAs that read codons beginning with uridine, leading to the formation of N6-(dimethylallyl)adenosine (i(6)A). The chain is tRNA dimethylallyltransferase from Chlorobium phaeobacteroides (strain DSM 266 / SMG 266 / 2430).